An 879-amino-acid chain; its full sequence is MERMGLNEIREEYLKFFESKAHLRLPSFSLVPKNDKSLLLINAGMAPLKPYFTGLQVPPNKRVTTCQKCVRTGDIENVGKTSRHGTFFEMMGNFSFGDYFKEEVIPWAWEFTTEVLKLPKNKLYVTIYEDDDEALDIWVNKTDMDPKRIFRLGKEDNFWEHGLGPCGPCSEIHFDRGAGEVKTSEEFVKASDEDKIVEFWNLVFTQFDKDEEGNYNKLANPNIDTGMGLERMATIMQNVDTIFEVDTIKAVLDKVCKLSGANYKEDRVKDISIRIITDHIRSITFMISDGILPSNEGRGYVLRRLLRRAARHGKTLGINNTFLHNLTDIVIENCYKNYPELEEKREYIKKIIKLEEERFDETIDAGMQILNDYIKEVKNNNYKILSGDKAFKLYDTYGFPVELTEEILEEEGISIDKEGFNKEMKEQRERARSAREETNYMGAEDTILNKIDLNINTDFEGYDKLEVKSKVAVIIKDEEFKNEMEKGNEGVIVTYNTPFYAEMGGQIGDTGIIYNDNFKAEVIDCKKNISGKILHFVKILDGKVALEDQVILKVNEERRNNIRKNHTATHILHAALIKVVGDHVQQSGSYVDDERLRFDFSHFEAVSEDELKEVEKIVNKEIMKANAVNTKVMNIEEAKQQGAIALFDNKYKDDVRVVSVGDFSKELCGGTHVSNSGQIGIFKIVSEAGVAAGIRRIEAVTAFKAMEYVDHKNNILKEAAQILKCNEKELLNKLNHQVLEMKEKEKEIEALKLKLASGAEDEILDNIKEIKGVKVASAAVKDIDGNALRDLGDKIRDNMQSGVVVLGSNYKGKVLFVAMATKDTVAKGVHCGKIIKEVATIAGGGGGGRPDMAQAGGKDPNKLEDAIKTVETVVESLVK.

Zn(2+) contacts are provided by His-566, His-570, Cys-668, and His-672.

It belongs to the class-II aminoacyl-tRNA synthetase family. It depends on Zn(2+) as a cofactor.

It localises to the cytoplasm. The catalysed reaction is tRNA(Ala) + L-alanine + ATP = L-alanyl-tRNA(Ala) + AMP + diphosphate. In terms of biological role, catalyzes the attachment of alanine to tRNA(Ala) in a two-step reaction: alanine is first activated by ATP to form Ala-AMP and then transferred to the acceptor end of tRNA(Ala). Also edits incorrectly charged Ser-tRNA(Ala) and Gly-tRNA(Ala) via its editing domain. This is Alanine--tRNA ligase from Clostridium botulinum (strain Hall / ATCC 3502 / NCTC 13319 / Type A).